We begin with the raw amino-acid sequence, 123 residues long: DNA-directed RNA polymerase subunit omega (123 aa).

Positions 72–100 (QRVLPSEDEEDAAREERGQQMEALPAPPV) are disordered.

It belongs to the RNA polymerase subunit omega family. In terms of assembly, the RNAP catalytic core consists of 2 alpha, 1 beta, 1 beta' and 1 omega subunit. When a sigma factor is associated with the core the holoenzyme is formed, which can initiate transcription.

It carries out the reaction RNA(n) + a ribonucleoside 5'-triphosphate = RNA(n+1) + diphosphate. In terms of biological role, promotes RNA polymerase assembly. Latches the N- and C-terminal regions of the beta' subunit thereby facilitating its interaction with the beta and alpha subunits. The sequence is that of DNA-directed RNA polymerase subunit omega from Maricaulis maris (strain MCS10) (Caulobacter maris).